The following is an 877-amino-acid chain: Dynamin (877 aa).

Residues 23 to 289 (QLDLPQIAVV…LTNHIRDTLP (267 aa)) form the Dynamin-type G domain. Residues 33 to 40 (GGQSAGKS) are G1 motif. Residue 33-41 (GGQSAGKSS) coordinates GTP. The segment at 59-61 (VTR) is G2 motif. The segment at 131 to 134 (DLPG) is G3 motif. A G4 motif region spans residues 200-203 (TKLD). GTP contacts are provided by residues 200–206 (TKLDLMD) and 231–234 (NRSQ). Residues 230–233 (VNRS) are G5 motif. The region spanning 513–621 (QVIRKGHMVI…WKASFLRAGV (109 aa)) is the PH domain. Disordered stretches follow at residues 623–648 (PEKQETQENGDESASEESSSDPQLER) and 740–834 (TVSS…SGAV). Residues 630-641 (ENGDESASEESS) are compositionally biased toward acidic residues. The GED domain maps to 650-741 (VETIRNLVDS…IIGDVSMATV (92 aa)). A phosphoserine mark is found at serine 756, serine 764, and serine 767. Over residues 788–826 (PPLPPSTGRPAPAIPNRPGGGAPPLPGGRPGGSLPPPML) the composition is skewed to pro residues.

This sequence belongs to the TRAFAC class dynamin-like GTPase superfamily. Dynamin/Fzo/YdjA family.

It is found in the cytoplasm. The protein resides in the cytoskeleton. It catalyses the reaction GTP + H2O = GDP + phosphate + H(+). Microtubule-associated force-producing protein which is involved in the production of microtubule bundles and which is able to bind and hydrolyze GTP. Implicated in endocytic protein sorting. This chain is Dynamin (shi), found in Drosophila melanogaster (Fruit fly).